A 463-amino-acid polypeptide reads, in one-letter code: Xanthone prenyltransferase B (463 aa).

Belongs to the tryptophan dimethylallyltransferase family.

The protein operates within secondary metabolite biosynthesis. Its activity is regulated as follows. Mn(2+) and Co(2+) strongly enhance prenylation activity. Dehydrogenase involved in the conversion of monodictyphenone to the prenyl xanthones such as emericellin, shamixanthone and epishamixanthone. Monodictyphenone is first converted to variecoxanthone A via a paeciloxanthone intermediate by the consecutive actions of the FAD-dependent monooxygenase mdpD and the xanthone prenyltransferase xptB. XptB catalyzes regular O-prenylation at the hydroxy group of C-7 of the xanthone ring. Variecoxanthone A is further prenylated to emericellin by xptA before being reduced to shamixanthone and epishamixanthone by the dehydrogenase xptC. The polypeptide is Xanthone prenyltransferase B (Emericella nidulans (strain FGSC A4 / ATCC 38163 / CBS 112.46 / NRRL 194 / M139) (Aspergillus nidulans)).